A 66-amino-acid polypeptide reads, in one-letter code: Alpha-conotoxin-like Tx2 (66 aa).

The first 21 residues, 1–21, serve as a signal peptide directing secretion; sequence MGMRMMFTVFLLVVLATTVVS. Residues 22–49 constitute a propeptide that is removed on maturation; sequence FTSGRRTFHGRNAAAKASGLVSLTDRRP. Disulfide bonds link Cys-51–Cys-57 and Cys-52–Cys-65. The segment at 53-55 is ser-Xaa-Pro motif, crucial for potent interaction with nAChR; that stretch reads SHP.

This sequence belongs to the conotoxin A superfamily. In terms of tissue distribution, expressed by the venom duct.

It is found in the secreted. In terms of biological role, alpha-conotoxins act on postsynaptic membranes, they bind to the nicotinic acetylcholine receptors (nAChR) and thus inhibit them. In Conus textile (Cloth-of-gold cone), this protein is Alpha-conotoxin-like Tx2.